The following is a 1201-amino-acid chain: HEAT repeat-containing protein 6 (1201 aa).

The segment at 1–25 (MAGKVTFLGSNSSFSPDGKTQGFKS) is disordered. Residues 182 to 221 (PDLLGPSGVLVKYGDPKQPDIELRRSAVHCIANLCLSVPS) form an HEAT 1 repeat. The tract at residues 321 to 390 (AVKPEPAQDT…SQSSMLTSPS (70 aa)) is disordered. Basic residues predominate over residues 341–352 (QKKRKSRGKGKK). Residues 375–390 (SGWSHGSQSSMLTSPS) show a composition bias toward polar residues. HEAT repeat units lie at residues 460–498 (GIGGPPPLTLLTIALKDPLPKVRAGSLQVLSALLEGSRQ), 523–560 (SIRELHRGLLLALIAESSCQTLTQVLKCLAHLVSNVPY), and 566–603 (GLLSPLWKQIRPYVRHRDVNVRVSSLTLFGALVSTQAP). Over residues 618 to 633 (SSLGSGISTPQESPLS) the composition is skewed to polar residues. The segment at 618-653 (SSLGSGISTPQESPLSWRQPARRDEEASSPAAAEGP) is disordered.

The sequence is that of HEAT repeat-containing protein 6 (heatr6) from Danio rerio (Zebrafish).